The following is a 204-amino-acid chain: MSGREDEEEDLGTAMQKIPIPVNVFDKEPMDLDTVFGFADGVREIIEDSNLLLEESREFDTNDSKPSRNFSNLPTATRGRLHAPKRSGNKRGRQKRLSFKSPSDLFDSKFGITDKSCSHCGTRKTPLWREGPRGAGTLCNACGMRYRTGRLLPEYRPASSPDFKPNVHSNFHRKVMEIRRERKSSPPNSFGFSESYHSTRKLGF.

The segment covering 57 to 66 has biased composition (basic and acidic residues); the sequence is REFDTNDSKP. Residues 57 to 102 are disordered; it reads REFDTNDSKPSRNFSNLPTATRGRLHAPKRSGNKRGRQKRLSFKSP. Basic residues predominate over residues 79 to 98; that stretch reads GRLHAPKRSGNKRGRQKRLS. The GATA-type zinc-finger motif lies at 111 to 165; sequence GITDKSCSHCGTRKTPLWREGPRGAGTLCNACGMRYRTGRLLPEYRPASSPDFKP. A disordered region spans residues 180 to 204; the sequence is RERKSSPPNSFGFSESYHSTRKLGF. Residues 185–196 show a composition bias toward polar residues; sequence SPPNSFGFSESY.

This sequence belongs to the type IV zinc-finger family. Class A subfamily.

The protein resides in the nucleus. In terms of biological role, transcriptional activator that specifically binds 5'-GATA-3' or 5'-GAT-3' motifs within gene promoters. May be involved in the regulation of some light-responsive genes. This chain is GATA transcription factor 14 (GATA14), found in Arabidopsis thaliana (Mouse-ear cress).